Here is a 211-residue protein sequence, read N- to C-terminus: Endonuclease V (211 aa).

Positions 37 and 102 each coordinate Mg(2+).

The protein belongs to the endonuclease V family. It depends on Mg(2+) as a cofactor.

The protein resides in the cytoplasm. The catalysed reaction is Endonucleolytic cleavage at apurinic or apyrimidinic sites to products with a 5'-phosphate.. In terms of biological role, DNA repair enzyme involved in the repair of deaminated bases. Selectively cleaves double-stranded DNA at the second phosphodiester bond 3' to a deoxyinosine leaving behind the intact lesion on the nicked DNA. The chain is Endonuclease V from Ignicoccus hospitalis (strain KIN4/I / DSM 18386 / JCM 14125).